Reading from the N-terminus, the 258-residue chain is Ubiquinone/menaquinone biosynthesis C-methyltransferase UbiE (258 aa).

S-adenosyl-L-methionine contacts are provided by residues threonine 81, aspartate 102, and 130 to 131 (NA).

The protein belongs to the class I-like SAM-binding methyltransferase superfamily. MenG/UbiE family.

It carries out the reaction a 2-demethylmenaquinol + S-adenosyl-L-methionine = a menaquinol + S-adenosyl-L-homocysteine + H(+). It catalyses the reaction a 2-methoxy-6-(all-trans-polyprenyl)benzene-1,4-diol + S-adenosyl-L-methionine = a 5-methoxy-2-methyl-3-(all-trans-polyprenyl)benzene-1,4-diol + S-adenosyl-L-homocysteine + H(+). Its pathway is quinol/quinone metabolism; menaquinone biosynthesis; menaquinol from 1,4-dihydroxy-2-naphthoate: step 2/2. It participates in cofactor biosynthesis; ubiquinone biosynthesis. In terms of biological role, methyltransferase required for the conversion of demethylmenaquinol (DMKH2) to menaquinol (MKH2) and the conversion of 2-polyprenyl-6-methoxy-1,4-benzoquinol (DDMQH2) to 2-polyprenyl-3-methyl-6-methoxy-1,4-benzoquinol (DMQH2). This chain is Ubiquinone/menaquinone biosynthesis C-methyltransferase UbiE, found in Rhizobium rhizogenes (strain K84 / ATCC BAA-868) (Agrobacterium radiobacter).